The chain runs to 180 residues: 2-oxoglutarate dehydrogenase, mitochondrial (180 aa).

Position 14 is an N6-succinyllysine (Lys-14). At Ser-40 the chain carries Phosphoserine. Position 64 (Arg-64) interacts with thiamine diphosphate.

It belongs to the alpha-ketoglutarate dehydrogenase family. As to quaternary structure, homodimer. The 2-oxoglutarate dehydrogenase complex is composed of OGDH (2-oxoglutarate dehydrogenase; E1), DLST (dihydrolipoamide succinyltransferase; E2) and DLD (dihydrolipoamide dehydrogenase; E3). It contains multiple copies of the three enzymatic components (E1, E2 and E3). In the nucleus, the 2-oxoglutarate dehydrogenase complex associates with KAT2A. Interacts with ABHD11; this interaction maintains the functional lipoylation of the 2-oxoglutarate dehydrogenase complex. Thiamine diphosphate serves as cofactor. Requires Mg(2+) as cofactor.

It localises to the mitochondrion matrix. It is found in the nucleus. The enzyme catalyses N(6)-[(R)-lipoyl]-L-lysyl-[protein] + 2-oxoglutarate + H(+) = N(6)-[(R)-S(8)-succinyldihydrolipoyl]-L-lysyl-[protein] + CO2. Its activity is regulated as follows. Calcium ions and ADP stimulate, whereas ATP and NADH reduce catalytic activity. In terms of biological role, 2-oxoglutarate dehydrogenase (E1) component of the 2-oxoglutarate dehydrogenase complex (OGDHC), which mediates the decarboxylation of alpha-ketoglutarate. The 2-oxoglutarate dehydrogenase complex catalyzes the overall conversion of 2-oxoglutarate to succinyl-CoA and CO(2). The 2-oxoglutarate dehydrogenase complex is mainly active in the mitochondrion. A fraction of the 2-oxoglutarate dehydrogenase complex also localizes in the nucleus and is required for lysine succinylation of histones: associates with KAT2A on chromatin and provides succinyl-CoA to histone succinyltransferase KAT2A. The sequence is that of 2-oxoglutarate dehydrogenase, mitochondrial from Mesocricetus auratus (Golden hamster).